The sequence spans 366 residues: Chorismate synthase (366 aa).

Residues arginine 48 and arginine 54 each coordinate NADP(+). Residues 125 to 127 (RSS), 238 to 239 (NA), glycine 278, 293 to 297 (KPTSS), and arginine 319 contribute to the FMN site.

The protein belongs to the chorismate synthase family. As to quaternary structure, homotetramer. FMNH2 serves as cofactor.

It carries out the reaction 5-O-(1-carboxyvinyl)-3-phosphoshikimate = chorismate + phosphate. The protein operates within metabolic intermediate biosynthesis; chorismate biosynthesis; chorismate from D-erythrose 4-phosphate and phosphoenolpyruvate: step 7/7. Catalyzes the anti-1,4-elimination of the C-3 phosphate and the C-6 proR hydrogen from 5-enolpyruvylshikimate-3-phosphate (EPSP) to yield chorismate, which is the branch point compound that serves as the starting substrate for the three terminal pathways of aromatic amino acid biosynthesis. This reaction introduces a second double bond into the aromatic ring system. The chain is Chorismate synthase from Burkholderia cenocepacia (strain HI2424).